Reading from the N-terminus, the 365-residue chain is Autoinducer 2-binding periplasmic protein LuxP (365 aa).

The N-terminal stretch at 1 to 23 (MKKALLFSLISMVGFSPASQATQ) is a signal peptide.

The protein belongs to the bacterial solute-binding protein 2 family.

The protein localises to the periplasm. In terms of biological role, binds to the signaling molecule autoinducer 2 (AI-2), a furanosyl borate diester, (3a-methyl-5,6-dihydrofuro-[2,3d][1,3,2]dioxaborole-2,2,6,6a-tetraol). This complex then interacts with the LuxQ sensor protein. This Vibrio harveyi (Beneckea harveyi) protein is Autoinducer 2-binding periplasmic protein LuxP (luxP).